The primary structure comprises 152 residues: Putative RRN3-like protein RRN3P1 (152 aa).

This sequence belongs to the RRN3 family.

This Homo sapiens (Human) protein is Putative RRN3-like protein RRN3P1 (RRN3P1).